Reading from the N-terminus, the 152-residue chain is UPF0266 membrane protein YobD (152 aa).

Transmembrane regions (helical) follow at residues 6–26 (LVLI…QFIM), 45–65 (VDSV…VTSH), and 67–87 (AQMT…IFWI).

This sequence belongs to the UPF0266 family.

It is found in the cell inner membrane. This chain is UPF0266 membrane protein YobD, found in Salmonella agona (strain SL483).